A 188-amino-acid chain; its full sequence is Der GTPase-activating protein YihI (188 aa).

2 disordered regions span residues 1–80 (MKQP…VPVP) and 162–188 (DEDD…KDTF). Residues 27-37 (TRDELDAEARD) show a composition bias toward basic and acidic residues. Residues 47–57 (NRSGARTNVEG) are compositionally biased toward polar residues.

It belongs to the YihI family. In terms of assembly, interacts with Der.

Its function is as follows. A GTPase-activating protein (GAP) that modifies Der/EngA GTPase function. May play a role in ribosome biogenesis. In Yersinia pseudotuberculosis serotype O:1b (strain IP 31758), this protein is Der GTPase-activating protein YihI.